The following is a 238-amino-acid chain: MALVPCQVLRMAILLSYCSILCNYKAIEMPSHQTYGGSWKFLTFIDLVIQAVFFGICVLTDLSSLLTRGSGNQEQERQLKKLISLRDWMLAVLAFPVGVFVVAVFWIIYAYDREMIYPKLLDNFIPGWLNHGMHTTVLPFILIEMRTSHHQYPSRSSGLTAICTFSVGYILWVCWVHHVTGMWVYPFLEHIGPGARIIFFGSTTILMNFLYLLGEVLNNYIWDTQKSMEEEKEKPKLE.

Residues 1-12 are Cytoplasmic-facing; it reads MALVPCQVLRMA. The helical transmembrane segment at 13 to 30 threads the bilayer; that stretch reads ILLSYCSILCNYKAIEMP. Topologically, residues 31 to 44 are extracellular; the sequence is SHQTYGGSWKFLTF. Residues 45–67 form a helical membrane-spanning segment; sequence IDLVIQAVFFGICVLTDLSSLLT. Topologically, residues 68–87 are cytoplasmic; sequence RGSGNQEQERQLKKLISLRD. A helical transmembrane segment spans residues 88–110; sequence WMLAVLAFPVGVFVVAVFWIIYA. At 111–124 the chain is on the extracellular side; that stretch reads YDREMIYPKLLDNF. The chain crosses the membrane as a helical span at residues 125 to 144; it reads IPGWLNHGMHTTVLPFILIE. Topologically, residues 145–156 are cytoplasmic; the sequence is MRTSHHQYPSRS. A helical transmembrane segment spans residues 157-179; sequence SGLTAICTFSVGYILWVCWVHHV. Residues 180 to 193 are Extracellular-facing; the sequence is TGMWVYPFLEHIGP. A helical membrane pass occupies residues 194-216; it reads GARIIFFGSTTILMNFLYLLGEV. Topologically, residues 217–238 are cytoplasmic; the sequence is LNNYIWDTQKSMEEEKEKPKLE.

Belongs to the AIG1 family. Highly expressed in heart, ovary, testis, liver, and kidney, at lower levels in spleen, prostate, brain, skeletal muscle, pancreas, small intestine and colon, and undetected in peripheral blood leukocytes, thymus, lung and placenta. AIG1 expression is higher in hair follicles from males than from females.

The protein localises to the cell membrane. It carries out the reaction 9-hexadecanoyloxy-octadecanoate + H2O = 9-hydroxy-octadecanoate + hexadecanoate + H(+). The catalysed reaction is 12-hexadecanoyloxy-octadecanoate + H2O = 12-hydroxyoctadecanoate + hexadecanoate + H(+). It catalyses the reaction 9-(9Z-hexadecenoyloxy)-octadecanoate + H2O = (9Z)-hexadecenoate + 9-hydroxy-octadecanoate + H(+). The enzyme catalyses 12-(9Z-hexadecenoyloxy)-octadecanoate + H2O = 12-hydroxyoctadecanoate + (9Z)-hexadecenoate + H(+). It carries out the reaction 13-(9Z-hexadecenoyloxy)-octadecanoate + H2O = 13-hydroxy-octadecanoate + (9Z)-hexadecenoate + H(+). The catalysed reaction is 9-octadecanoyloxy-octadecanoate + H2O = 9-hydroxy-octadecanoate + octadecanoate + H(+). It catalyses the reaction 12-octadecanoyloxy-octadecanoate + H2O = 12-hydroxyoctadecanoate + octadecanoate + H(+). The enzyme catalyses 13-octadecanoyloxy-octadecanoate + H2O = 13-hydroxy-octadecanoate + octadecanoate + H(+). It carries out the reaction 9-(9Z-octadecenoyloxy)-octadecanoate + H2O = 9-hydroxy-octadecanoate + (9Z)-octadecenoate + H(+). The catalysed reaction is 12-(9Z-octadecenoyloxy)-octadecanoate + H2O = 12-hydroxyoctadecanoate + (9Z)-octadecenoate + H(+). It catalyses the reaction 13-(9Z-octadecenoyloxy)-octadecanoate + H2O = 13-hydroxy-octadecanoate + (9Z)-octadecenoate + H(+). The enzyme catalyses 5-(9Z-hexadecenoyloxy)-octadecanoate + H2O = 5-hydroxy-octadecanoate + (9Z)-hexadecenoate + H(+). Inhibited by N-hydroxyhydantoin carbamate JJH260 and beta-lactone KC01. Hydrolyzes bioactive fatty-acid esters of hydroxy-fatty acids (FAHFAs), but not other major classes of lipids. Show a preference for FAHFAs with branching distal from the carboxylate head group of the lipids. This chain is Androgen-induced gene 1 protein (AIG1), found in Homo sapiens (Human).